A 738-amino-acid polypeptide reads, in one-letter code: Putative cyclic nucleotide-gated ion channel 7 (738 aa).

Residues 1–104 (MYKSQYISGQ…DKTLLVWNRL (104 aa)) lie on the Cytoplasmic side of the membrane. A helical transmembrane segment spans residues 105-125 (FVISCILAVSVDPLFFYLPIV). The Extracellular segment spans residues 126–139 (DNSGSSCIGIDTKL). The helical transmembrane segment at 140–160 (AVTTTTLRTIVDVFYLTRMAL) threads the bilayer. Topologically, residues 161–193 (QFRTAYIAPSSRVFGRGELVIDPAKIAERYLTR) are cytoplasmic. Residues 194-214 (YFVVDFLAVLPLPQIAVWKFL) traverse the membrane as a helical segment. At 215–227 (HGSKGSDVLPTKT) the chain is on the extracellular side. A helical transmembrane segment spans residues 228-248 (ALLNIVIVQYIPRFVRFIPLT). Topologically, residues 249 to 268 (SELKKTAGAFAEGAWAGAAY) are cytoplasmic. The helical transmembrane segment at 269–289 (YLLWYMLASHITGAFWYMLSV) threads the bilayer. At 290–395 (ERNDTCWRFA…GQGLQTSTFP (106 aa)) the chain is on the extracellular side. The chain crosses the membrane as a helical span at residues 396 to 416 (GEVLFSIAIAIAGLLLFALLI). The Cytoplasmic segment spans residues 417–738 (GNMQTYLQSL…KPPEPDFDAE (322 aa)). A nucleoside 3',5'-cyclic phosphate-binding positions include 502 to 632 (LFAN…TFRF) and Glu573. The tract at residues 618 to 633 (FRRLHSRQVQQTFRFY) is calmodulin-binding. Residues 638-667 (RTWASCFIQAAWRRYSRRKNAELRRIEEKE) form the IQ domain. 2 disordered regions span residues 671–693 (GYED…SESS) and 715–738 (LRSS…FDAE).

Belongs to the cyclic nucleotide-gated cation channel (TC 1.A.1.5) family. In terms of assembly, homotetramer or heterotetramer.

The protein localises to the cell membrane. Putative cyclic nucleotide-gated ion channel. This is Putative cyclic nucleotide-gated ion channel 7 (CNGC7) from Arabidopsis thaliana (Mouse-ear cress).